Consider the following 289-residue polypeptide: Bidirectional sugar transporter SWEET11 (289 aa).

Topologically, residues 1–9 are extracellular; sequence MSLFNTENT. The helical transmembrane segment at 10 to 30 threads the bilayer; it reads WAFVFGLLGNLISFAVFLSPV. The region spanning 12 to 98 is the MtN3/slv 1 domain; sequence FVFGLLGNLI…SMFLAYAPKP (87 aa). The Cytoplasmic portion of the chain corresponds to 31–43; it reads PTFYRIWKKKTTE. A helical transmembrane segment spans residues 44-64; the sequence is GFQSIPYVVALFSATLWLYYA. At 65–70 the chain is on the extracellular side; the sequence is TQKKDV. Residues 71–91 traverse the membrane as a helical segment; it reads FLLVTINAFGCFIETIYISMF. The Cytoplasmic segment spans residues 92–105; the sequence is LAYAPKPARMLTVK. Residues 106-126 form a helical membrane-spanning segment; sequence MLLLMNFGGFCAILLLCQFLV. Over 127 to 133 the chain is Extracellular; the sequence is KGATRAK. The helical transmembrane segment at 134–154 threads the bilayer; the sequence is IIGGICVGFSVCVFAAPLSII. The MtN3/slv 2 domain occupies 134-218; it reads IIGGICVGFS…ILYVVYKYCK (85 aa). The Cytoplasmic segment spans residues 155 to 167; the sequence is RTVIKTRSVEYMP. The chain crosses the membrane as a helical span at residues 168 to 188; the sequence is FSLSLTLTISAVIWLLYGLAL. At 189–192 the chain is on the extracellular side; sequence KDIY. Residues 193–213 form a helical membrane-spanning segment; the sequence is VAFPNVLGFALGALQMILYVV. The Cytoplasmic segment spans residues 214-289; the sequence is YKYCKTSPHL…GKQSSSAAAT (76 aa). Residues 266–289 form a disordered region; it reads DRRAEIEDGQTPKHGKQSSSAAAT. Phosphothreonine is present on Thr276.

It belongs to the SWEET sugar transporter family. Forms homooligomers and heterooligomers with SWEET1, SWEET3, SWEET5, SWEET6, SWEET7, SWEET8, SWEET9, SWEET12, SWEET13, SWEET15 and SWEET17. In terms of tissue distribution, expressed in leaves, especially in phloem. Expressed in developing seeds.

It is found in the cell membrane. In terms of biological role, mediates both low-affinity uptake and efflux of sugar across the plasma membrane. Involved in phloem loading by mediating export from parenchyma cells feeding H(+)-coupled import into the sieve element/companion cell complex, thus contributing to the sucrose migration from sites of synthesis in the mesophyll to the phloem. Contributes to seed filling by triggering sucrose efflux involved in the transfer of sugars from seed coat to embryos. In Arabidopsis thaliana (Mouse-ear cress), this protein is Bidirectional sugar transporter SWEET11.